Consider the following 86-residue polypeptide: Cytochrome c oxidase subunit 6B1 (86 aa).

Ala-2 is subject to N-acetylalanine. The 47-residue stretch at 27–73 folds into the CHCH domain; the sequence is TRNCWQNYLDFHRCQKAMTAKGGDISVCEWYQRVYQSLCPTSWVTDW. The Cx9C motif signature appears at 30–40; the sequence is CWQNYLDFHRC. Disulfide bonds link Cys-30/Cys-65 and Cys-40/Cys-54. The Cx10C motif motif lies at 54–65; the sequence is CEWYQRVYQSLC.

It belongs to the cytochrome c oxidase subunit 6B family. In terms of assembly, component of the cytochrome c oxidase (complex IV, CIV), a multisubunit enzyme composed of 14 subunits. The complex is composed of a catalytic core of 3 subunits MT-CO1, MT-CO2 and MT-CO3, encoded in the mitochondrial DNA, and 11 supernumerary subunits COX4I1 (or COX4I2), COX5A, COX5B, COX6A1 (or COX6A2), COX6B1 (or COX6B2), COX6C, COX7A2 (or COX7A1), COX7B, COX7C, COX8A and NDUFA4, which are encoded in the nuclear genome. The complex exists as a monomer or a dimer and forms supercomplexes (SCs) in the inner mitochondrial membrane with NADH-ubiquinone oxidoreductase (complex I, CI) and ubiquinol-cytochrome c oxidoreductase (cytochrome b-c1 complex, complex III, CIII), resulting in different assemblies (supercomplex SCI(1)III(2)IV(1) and megacomplex MCI(2)III(2)IV(2)).

It localises to the mitochondrion inner membrane. It functions in the pathway energy metabolism; oxidative phosphorylation. Component of the cytochrome c oxidase, the last enzyme in the mitochondrial electron transport chain which drives oxidative phosphorylation. The respiratory chain contains 3 multisubunit complexes succinate dehydrogenase (complex II, CII), ubiquinol-cytochrome c oxidoreductase (cytochrome b-c1 complex, complex III, CIII) and cytochrome c oxidase (complex IV, CIV), that cooperate to transfer electrons derived from NADH and succinate to molecular oxygen, creating an electrochemical gradient over the inner membrane that drives transmembrane transport and the ATP synthase. Cytochrome c oxidase is the component of the respiratory chain that catalyzes the reduction of oxygen to water. Electrons originating from reduced cytochrome c in the intermembrane space (IMS) are transferred via the dinuclear copper A center (CU(A)) of subunit 2 and heme A of subunit 1 to the active site in subunit 1, a binuclear center (BNC) formed by heme A3 and copper B (CU(B)). The BNC reduces molecular oxygen to 2 water molecules using 4 electrons from cytochrome c in the IMS and 4 protons from the mitochondrial matrix. The sequence is that of Cytochrome c oxidase subunit 6B1 (COX6B1) from Homo sapiens (Human).